Reading from the N-terminus, the 37-residue chain is Esculentin-2Ra (37 aa).

Cysteines 31 and 37 form a disulfide.

In terms of tissue distribution, expressed by the skin glands.

Its subcellular location is the secreted. Functionally, antimicrobial peptide. The chain is Esculentin-2Ra from Pelophylax ridibundus (Marsh frog).